A 34-amino-acid polypeptide reads, in one-letter code: Brevinin-2GHa (34 aa).

An intrachain disulfide couples Cys27 to Cys33.

Expressed by the skin glands.

Its subcellular location is the secreted. Its function is as follows. Antimicrobial peptide. Active against the Gram-positive bacteria S.aureus FDA209P (MIC=14.9 ug/ml) and B.subtilis ATCC 6633 (MIC&gt;64 ug/ml), but not active against the Gram-negative bacterium E.coli or the fungus C.albicans. This is Brevinin-2GHa from Sylvirana guentheri (Gunther's frog).